The chain runs to 268 residues: 4-diphosphocytidyl-2-C-methyl-D-erythritol kinase (268 aa).

Lys-10 is an active-site residue. 101–111 (PTQAGLGGGST) is an ATP binding site. Asp-143 is a catalytic residue.

Belongs to the GHMP kinase family. IspE subfamily.

The catalysed reaction is 4-CDP-2-C-methyl-D-erythritol + ATP = 4-CDP-2-C-methyl-D-erythritol 2-phosphate + ADP + H(+). It functions in the pathway isoprenoid biosynthesis; isopentenyl diphosphate biosynthesis via DXP pathway; isopentenyl diphosphate from 1-deoxy-D-xylulose 5-phosphate: step 3/6. Its function is as follows. Catalyzes the phosphorylation of the position 2 hydroxy group of 4-diphosphocytidyl-2C-methyl-D-erythritol. The sequence is that of 4-diphosphocytidyl-2-C-methyl-D-erythritol kinase from Helicobacter pylori (strain ATCC 700392 / 26695) (Campylobacter pylori).